We begin with the raw amino-acid sequence, 591 residues long: MKRTNYAGLIDETYLNQTVTLTGWVQKRRDFGDLIFVDLRDREGIVQLTFNATNADALAVAEKVRSEYVLKITGHVIERAENQINTKIKSGTIEVDVTEAEILSTSKTPPFYIEDDVNANEELKLQYRYLDLRRPEMQKNLRIRSKIMSSAMHFMDTHDFINIETPVLAKSTPEGARDYLVPSRVFPGSFYALPQSPQLFKQLLMGAGFDRYFQIARAFRDEDLRGDRQPEFTQMDVETSFMTADEIRELVNAWVKAMMHDVVDFDLDTAEIPTLTWQESMDRFGTDKPDLRIAYEIKDLSETVKNSEFGVFANAIKGGGVVKALAVPGGADHYSRKDIDKLTKYIERFGAKGLAWMKVAPEGLTGPIAKFFDDEAQAALIASADAQVGDLLLFGAGRADVVSATLDYLRRETAKALDLIDQTNPWAFAWIVDWPLFEYSEDFDRWIAAHHPFTMPNEEDLHYLNDGEDPHKAHAQSYDLVLNGYELGSGSIRIHRMDIQEKMLKALGFTPEKAHEAFGFLLEGMEYGFPPMGGIALGLDRLAMLLAGQENIREVIAFPKNSRATEPMTEAPTRVEGKQLNELGLFVPEAE.

Glu174 contributes to the L-aspartate binding site. The aspartate stretch occupies residues 198–201; it reads QLFK. Arg220 serves as a coordination point for L-aspartate. ATP-binding positions include 220-222 and Gln229; that span reads RDE. His450 lines the L-aspartate pocket. Position 486 (Glu486) interacts with ATP. Residue Arg493 coordinates L-aspartate. Residue 538–541 coordinates ATP; the sequence is GLDR.

Belongs to the class-II aminoacyl-tRNA synthetase family. Type 1 subfamily. In terms of assembly, homodimer.

It is found in the cytoplasm. The enzyme catalyses tRNA(Asp) + L-aspartate + ATP = L-aspartyl-tRNA(Asp) + AMP + diphosphate. In terms of biological role, catalyzes the attachment of L-aspartate to tRNA(Asp) in a two-step reaction: L-aspartate is first activated by ATP to form Asp-AMP and then transferred to the acceptor end of tRNA(Asp). The sequence is that of Aspartate--tRNA ligase from Leuconostoc mesenteroides subsp. mesenteroides (strain ATCC 8293 / DSM 20343 / BCRC 11652 / CCM 1803 / JCM 6124 / NCDO 523 / NBRC 100496 / NCIMB 8023 / NCTC 12954 / NRRL B-1118 / 37Y).